The sequence spans 968 residues: uncharacterized protein (968 aa).

The first 27 residues, M1 to A27, serve as a signal peptide directing secretion. The region spanning G703–W968 is the Autotransporter domain.

This is an uncharacterized protein from Escherichia coli (strain K12).